A 90-amino-acid chain; its full sequence is Evasin P1126 (90 aa).

Positions 1–25 (MTSHSAVRIAIFAVIALHSIFECLS) are cleaved as a signal peptide. 3 disulfide bridges follow: cysteine 46–cysteine 62, cysteine 50–cysteine 64, and cysteine 58–cysteine 75. N-linked (GlcNAc...) asparagine glycosylation is present at asparagine 55. Asparagine 77 carries an N-linked (GlcNAc...) asparagine glycan.

It is found in the secreted. Its function is as follows. Salivary chemokine-binding protein which binds to host chemokines CXCL1, CXCL2, CXCL3, CXCL4, CXCL5, CXCL6, CXCL7, CXCL10 and CXCL11. The protein is Evasin P1126 of Amblyomma cajennense (Cayenne tick).